The sequence spans 63 residues: Antimicrobial peptide 2 (63 aa).

Positions 1–27 (MAKVPIAFLKFVIVLILFIAMSGMIEA) are cleaved as a signal peptide. Cystine bridges form between Cys-28–Cys-45, Cys-35–Cys-49, and Cys-44–Cys-60.

It belongs to the AMP family. As to quaternary structure, homodimer. Seed specific.

It is found in the secreted. Its function is as follows. Possesses antifungal activity and is also active on two tested Gram-positive bacteria but is non-toxic for Gram-negative bacteria and cultured human cells. The polypeptide is Antimicrobial peptide 2 (AMP2) (Mirabilis jalapa (Garden four-o'clock)).